A 72-amino-acid polypeptide reads, in one-letter code: SRY-related protein AES6 (72 aa).

A DNA-binding region (HMG box) is located at residues 1–69; sequence VKRPMNAFMV…KHMADYPDYK (69 aa).

It is found in the nucleus. This Alligator mississippiensis (American alligator) protein is SRY-related protein AES6.